Reading from the N-terminus, the 430-residue chain is Bone morphogenetic protein 7 (430 aa).

The signal sequence occupies residues 1-29 (MHVRSLRAAAPHSFVALWAPLFLLRSALA). A propeptide spanning residues 30 to 291 (DFSLDNEVHS…ATEVHLRSIR (262 aa)) is cleaved from the precursor. 4 N-linked (GlcNAc...) asparagine glycosylation sites follow: asparagine 186, asparagine 301, asparagine 320, and asparagine 371. The interval 290–310 (IRSTGGKQRSQNRSKTPKNQE) is disordered. 3 cysteine pairs are disulfide-bonded: cysteine 329/cysteine 395, cysteine 358/cysteine 427, and cysteine 362/cysteine 429.

This sequence belongs to the TGF-beta family. In terms of assembly, homodimer; disulfide-linked. Interacts with SOSTDC1. Interacts with TWSG1. Interacts with FBN1 (via N-terminal domain) and FBN2. Interacts with type I receptor ACVR1. Interacts with type II receptor ACVR2A. Interacts with NOG; this interaction inhibits canonical BMP signaling. Interacts with SCUBE3. Interacts with ERFE; the interaction inhibits BMP-induced transcription of HAMP. Interacts with TGFBR3.

Its subcellular location is the secreted. In terms of biological role, growth factor of the TGF-beta superfamily that plays important role in various biological processes, including embryogenesis, hematopoiesis, neurogenesis and skeletal morphogenesis. Initiates the canonical BMP signaling cascade by associating with type I receptor ACVR1 and type II receptor ACVR2A. Once all three components are bound together in a complex at the cell surface, ACVR2A phosphorylates and activates ACVR1. In turn, ACVR1 propagates signal by phosphorylating SMAD1/5/8 that travel to the nucleus and act as activators and repressors of transcription of target genes. For specific functions such as growth cone collapse in developing spinal neurons and chemotaxis of monocytes, also uses BMPR2 as type II receptor. Can also signal through non-canonical pathways such as P38 MAP kinase signaling cascade that promotes brown adipocyte differentiation through activation of target genes, including members of the SOX family of transcription factors. Promotes the expression of HAMP, this is repressed by its interaction with ERFE. The chain is Bone morphogenetic protein 7 (Bmp7) from Mus musculus (Mouse).